The chain runs to 229 residues: MKQLINNDWWPVLKPQFETANYQQLHNFLVDEYGHQQVYPEMHHIFEAFNWTPFSKVKVVILGQDPYHGPGQAHGCSFSVLPGVAVPPSLQNIYKELQADLGCPPVKHGYLRSWAEQGVLLLNSVLTVRAGQAYSHQGHGWEQLTDAAIVALSKRPTPVVFILWGRAARDKKRLIDLKRNFVVESAHPSPLSAYRGFFGSRPFSKTNQFLEMTGQAPINWQLPSTVDHL.

D65 functions as the Proton acceptor in the catalytic mechanism.

It belongs to the uracil-DNA glycosylase (UDG) superfamily. UNG family.

It localises to the cytoplasm. It carries out the reaction Hydrolyzes single-stranded DNA or mismatched double-stranded DNA and polynucleotides, releasing free uracil.. Excises uracil residues from the DNA which can arise as a result of misincorporation of dUMP residues by DNA polymerase or due to deamination of cytosine. In Limosilactobacillus fermentum (strain NBRC 3956 / LMG 18251) (Lactobacillus fermentum), this protein is Uracil-DNA glycosylase.